The following is a 238-amino-acid chain: MPIRLYLIWGATTTGKTAQSVALARATGAPVISLDRVQCCHELAVGSGRPLPSELLGTRREYLCDRSVSSGVIPAADANQLLFDKVVRYSAHERALILEGGSVSLINAMIRDARWSALGEWALRRIVLPGRAVFIAQAIKRVRDMLEPPPGHASILDELEGLWAHPGNHAVLEDVDGYRQIIRYARASQVPIDRITSIDRSTMATLVERIAQEYWEHALWQEQEFLGIPATWRRADDA.

Belongs to the isopentenyl transferase family.

The enzyme catalyses dimethylallyl diphosphate + AMP = N(6)-(dimethylallyl)adenosine 5'-phosphate + diphosphate. Transfers dimethylallyl groups to AMP as part of the biosynthesis of cytokinin phytohormones. This Ralstonia solanacearum (Pseudomonas solanacearum) protein is Adenylate dimethylallyltransferase (tzs).